The sequence spans 270 residues: Thiazole synthase (270 aa).

Catalysis depends on Lys111, which acts as the Schiff-base intermediate with DXP. Residues Gly172, 198–199 (AG), and 220–221 (NT) contribute to the 1-deoxy-D-xylulose 5-phosphate site.

The protein belongs to the ThiG family. As to quaternary structure, homotetramer. Forms heterodimers with either ThiH or ThiS.

The protein resides in the cytoplasm. The enzyme catalyses [ThiS sulfur-carrier protein]-C-terminal-Gly-aminoethanethioate + 2-iminoacetate + 1-deoxy-D-xylulose 5-phosphate = [ThiS sulfur-carrier protein]-C-terminal Gly-Gly + 2-[(2R,5Z)-2-carboxy-4-methylthiazol-5(2H)-ylidene]ethyl phosphate + 2 H2O + H(+). It functions in the pathway cofactor biosynthesis; thiamine diphosphate biosynthesis. Functionally, catalyzes the rearrangement of 1-deoxy-D-xylulose 5-phosphate (DXP) to produce the thiazole phosphate moiety of thiamine. Sulfur is provided by the thiocarboxylate moiety of the carrier protein ThiS. In vitro, sulfur can be provided by H(2)S. The protein is Thiazole synthase of Methylococcus capsulatus (strain ATCC 33009 / NCIMB 11132 / Bath).